The following is a 1083-amino-acid chain: Voltage-gated inwardly rectifying potassium channel KCNH3 (1083 aa).

Topologically, residues 1-228 (MPAMRGLLAP…HCGALRATWD (228 aa)) are cytoplasmic. In terms of domain architecture, PAS spans 18 to 90 (IATRFDGTHS…QQIRKALDEH (73 aa)). The region spanning 93–145 (FKAELILYRKSGLPFWCLLDVIPIKNEKGEVALFLVSHKDISETKNRGGPDRW) is the PAC domain. A compositionally biased stretch (basic and acidic residues) spans 137–150 (KNRGGPDRWKETGG). Positions 137–157 (KNRGGPDRWKETGGGRRRYGR) are disordered. A helical membrane pass occupies residues 229–249 (GFILLATLYVAVTVPYSVCVS). Residues 250–259 (TAREPSAARG) lie on the Extracellular side of the membrane. The chain crosses the membrane as a helical span at residues 260 to 280 (PPSVCDLAVEVLFILDIVLNF). At 281–302 (RTTFVSKSGQVVFAPKSICLHY) the chain is on the cytoplasmic side. The chain crosses the membrane as a helical span at residues 303-323 (VTTWFLLDVIAALPFDLLHAF). The Extracellular portion of the chain corresponds to 324–331 (KVNVYFGA). A helical; Voltage-sensor membrane pass occupies residues 332 to 352 (HLLKTVRLLRLLRLLPRLDRY). At 353-361 (SQYSAVVLT) the chain is on the cytoplasmic side. Residues 362–382 (LLMAVFALLAHWVACVWFYIG) traverse the membrane as a helical segment. Topologically, residues 383–453 (QREIESSESE…GGPSLRSAYI (71 aa)) are extracellular. N-linked (GlcNAc...) asparagine glycans are attached at residues asparagine 421, asparagine 428, and asparagine 436. Positions 454–474 (TSLYFALSSLTSVGFGNVSAN) form an intramembrane region, pore-forming. The short motif at 465 to 470 (SVGFGN) is the Selectivity filter element. Residues 475–479 (TDTEK) are Extracellular-facing. The helical transmembrane segment at 480–500 (IFSICTMLIGALMHAVVFGNV) threads the bilayer. Topologically, residues 501 to 1083 (TAIIQRMYAR…QWTQEEGTGV (583 aa)) are cytoplasmic. Residue 582–697 (LFEAASRGCL…FAPRFSRGLR (116 aa)) coordinates a nucleoside 3',5'-cyclic phosphate. Disordered stretches follow at residues 729–810 (EEKE…LRLP), 832–873 (CGSD…SEAR), and 972–1055 (MAPW…ALPW). Basic residues predominate over residues 773–785 (TAPRPRLGGRGRP). Residues 844-861 (GQSGPECSSSPSPGPESG) show a composition bias toward low complexity.

The protein belongs to the potassium channel family. H (Eag) (TC 1.A.1.20) subfamily. Kv12.2/KCNH3 sub-subfamily. The potassium channel is probably composed of a homo- or heterotetrameric complex of pore-forming alpha subunits that can associate with modulating beta subunits. Interacts with KCNE1 and KCNE3; these interactions regulate KCNH3 trafficking to the plasma membrane and its subsequent voltage-gated potassium channel activity. N-glycosylated. N-glycosylation mediates traffick to the cell membrane but is not necessary for voltage-gated potassium channel activity. Detected only in brain, in particular in the telencephalon. Detected in the cerebral cortex, occipital pole, frontal and temporal lobe, putamen, amygdala, hippocampus and caudate nucleus.

Its subcellular location is the cell membrane. The enzyme catalyses K(+)(in) = K(+)(out). Pore-forming (alpha) subunit of a voltage-gated inwardly rectifying potassium channel. Charactherized by a fast rate of activation during depolarization followed by a rapid inactivation at much more depolarized value causing inward rectification due to a C-type inactivation mechanism. Exhibits a rapid recovery from inactivation. This Homo sapiens (Human) protein is Voltage-gated inwardly rectifying potassium channel KCNH3.